Here is a 1823-residue protein sequence, read N- to C-terminus: Bromodomain-containing protein DDB_G0280777 (1823 aa).

Disordered regions lie at residues Asp-44–Glu-83 and Leu-200–Ser-281. Residues Ser-65 to Lys-77 show a composition bias toward basic and acidic residues. The span at Lys-210 to Lys-224 shows a compositional bias: basic residues. A compositionally biased stretch (basic and acidic residues) spans Ile-225 to Gln-250. Residues Gln-251–Gln-262 show a composition bias toward low complexity. Residues Glu-306 to Val-413 form the Bromo domain. 8 disordered regions span residues Glu-429–Thr-654, Asn-753–Leu-781, Ile-855–Pro-886, Asn-949–Phe-993, Leu-1055–Ser-1079, Ile-1190–Ser-1386, Gln-1453–Gln-1477, and Gln-1679–Gln-1823. Composition is skewed to low complexity over residues Asn-432–Leu-486, Cys-494–Ser-511, Gln-520–Arg-555, and Ser-570–Leu-579. Positions Ala-580–Asn-590 are enriched in polar residues. Over residues Met-601–Asn-614 the composition is skewed to basic and acidic residues. Positions Glu-631–Gln-643 are enriched in acidic residues. 5 stretches are compositionally biased toward low complexity: residues Asn-753 to Asn-779, Asn-863 to Asn-884, Asn-949 to Asn-958, Leu-1055 to Leu-1071, and Asn-1205 to Asn-1378. Positions Gln-1679 to Gln-1705 are enriched in low complexity. Basic and acidic residues-rich tracts occupy residues Pro-1716–Arg-1737 and Lys-1744–Leu-1755. Composition is skewed to low complexity over residues Asn-1756–Val-1767 and Ser-1789–Ser-1806. A compositionally biased stretch (basic residues) spans Lys-1813 to Gln-1823.

This chain is Bromodomain-containing protein DDB_G0280777, found in Dictyostelium discoideum (Social amoeba).